The following is a 413-amino-acid chain: ATP-dependent (S)-NAD(P)H-hydrate dehydratase (413 aa).

Residues 98–402 enclose the YjeF C-terminal domain; sequence NLNHFLSYVP…KSVPNALVWG (305 aa). (6S)-NADPHX-binding positions include Gly-199 and 252–258; that span reads NFVEYRA. Residues 292–296 and 311–320 contribute to the ATP site; these read KGQED and GMPRRCGGQG. Residue Asp-321 participates in (6S)-NADPHX binding.

Belongs to the NnrD/CARKD family. Mg(2+) is required as a cofactor.

The enzyme catalyses (6S)-NADHX + ATP = ADP + phosphate + NADH + H(+). It carries out the reaction (6S)-NADPHX + ATP = ADP + phosphate + NADPH + H(+). Functionally, catalyzes the dehydration of the S-form of NAD(P)HX at the expense of ATP, which is converted to ADP. Together with NAD(P)HX epimerase, which catalyzes the epimerization of the S- and R-forms, the enzyme allows the repair of both epimers of NAD(P)HX, a damaged form of NAD(P)H that is a result of enzymatic or heat-dependent hydration. This Heterostelium pallidum (strain ATCC 26659 / Pp 5 / PN500) (Cellular slime mold) protein is ATP-dependent (S)-NAD(P)H-hydrate dehydratase.